The chain runs to 662 residues: 72 kDa type IV collagenase (662 aa).

The N-terminal stretch at 1 to 29 (MEALGARGALAGFLRALCVLGCLLGRATA) is a signal peptide. Positions 30 to 109 (PPSPVIKFPG…PRCGNPDVAN (80 aa)) are cleaved as a propeptide — activation peptide. The Cysteine switch motif lies at 100 to 107 (PRCGNPDV). Cys-102 provides a ligand contact to Zn(2+). Residues 110–221 (YNFFPRKPKW…LWTLGEGQVV (112 aa)) are collagenase-like 1. Positions 134 and 168 each coordinate Ca(2+). Residues His-178 and Asp-180 each coordinate Zn(2+). Ca(2+) is bound by residues Asp-185 and Gly-186. His-193 lines the Zn(2+) pocket. Positions 200, 202, and 204 each coordinate Ca(2+). His-206 is a binding site for Zn(2+). Residues Asp-208, Asp-209, and Glu-211 each coordinate Ca(2+). The segment at 222 to 396 (RVKYGNADGE…WGFCPDQGYS (175 aa)) is collagen-binding. Fibronectin type-II domains are found at residues 228–276 (ADGE…FCPH), 286–334 (ADGQ…FCPE), and 344–392 (SEGA…FCPD). Disulfide bonds link Cys-233–Cys-259, Cys-247–Cys-274, Cys-291–Cys-317, Cys-305–Cys-332, Cys-349–Cys-375, and Cys-363–Cys-390. The tract at residues 397–467 (LFLVAAHEFG…GPTPTLGPVT (71 aa)) is collagenase-like 2. Zn(2+) is bound at residue His-403. The active site involves Glu-404. Residues His-407 and His-413 each contribute to the Zn(2+) site. The segment at 414-662 (SQDPGALMAP…GSIKTDWLGC (249 aa)) is required for inhibitor TIMP2 binding. Cys-471 and Cys-662 are joined by a disulfide. Hemopexin repeat units lie at residues 474-518 (DIVF…WPEL), 519-565 (PEKI…GLPP), 567-615 (VQRV…WNAI), and 616-662 (PDHL…WLGC). Residues Asp-478, Asp-523, and Asp-571 each coordinate Ca(2+). N-linked (GlcNAc...) asparagine glycosylation is present at Asn-575. Residue Asp-620 participates in Ca(2+) binding. Asn-644 is a glycosylation site (N-linked (GlcNAc...) asparagine).

Belongs to the peptidase M10A family. In terms of assembly, interacts (via the C-terminal hemopexin-like domains-containing region) with the integrin alpha-V/beta-3; the interaction promotes vascular invasion in angiogenic vessels and melamoma cells. Interacts (via the C-terminal PEX domain) with TIMP2 (via the C-terminal); the interaction inhibits the degradation activity. Interacts with GSK3B. It depends on Ca(2+) as a cofactor. Zn(2+) serves as cofactor. Post-translationally, phosphorylation on multiple sites modulates enzymatic activity. Phosphorylated by PKC in vitro. The propeptide is processed by MMP14 (MT-MMP1) and MMP16 (MT-MMP3). Autocatalytic cleavage in the C-terminal produces the anti-angiogenic peptide, PEX. This processing appears to be facilitated by binding integrinv/beta3.

The protein localises to the secreted. The protein resides in the extracellular space. It is found in the extracellular matrix. It localises to the membrane. Its subcellular location is the nucleus. It catalyses the reaction Cleavage of gelatin type I and collagen types IV, V, VII, X. Cleaves the collagen-like sequence Pro-Gln-Gly-|-Ile-Ala-Gly-Gln.. In terms of biological role, ubiquitinous metalloproteinase that is involved in diverse functions such as remodeling of the vasculature, angiogenesis, tissue repair, tumor invasion, inflammation, and atherosclerotic plaque rupture. As well as degrading extracellular matrix proteins, can also act on several nonmatrix proteins such as big endothelial 1 and beta-type CGRP promoting vasoconstriction. Also cleaves KISS at a Gly-|-Leu bond. Appears to have a role in myocardial cell death pathways. Contributes to myocardial oxidative stress by regulating the activity of GSK3beta. Cleaves GSK3beta in vitro. Involved in the formation of the fibrovascular tissues. Its function is as follows. PEX, the C-terminal non-catalytic fragment of MMP2, possesses anti-angiogenic and anti-tumor properties and inhibits cell migration and cell adhesion to FGF2 and vitronectin. Ligand for integrin alpha-v/beta-3 on the surface of blood vessels. The chain is 72 kDa type IV collagenase (MMP2) from Oryctolagus cuniculus (Rabbit).